A 376-amino-acid polypeptide reads, in one-letter code: TraB domain-containing protein (376 aa).

An N-acetylmethionine modification is found at Met1. At Thr64 the chain carries Phosphothreonine.

This Mus musculus (Mouse) protein is TraB domain-containing protein (Trabd).